A 403-amino-acid chain; its full sequence is Metacaspase-7 (403 aa).

Active-site residues include His-86 and Cys-139. Residue Cys-139 is modified to S-nitrosocysteine.

This sequence belongs to the peptidase C14B family. Post-translationally, proteolytically processed; by an autocatalytic mechanism. As to expression, expressed in roots, flowers and siliques.

The polypeptide is Metacaspase-7 (AMC7) (Arabidopsis thaliana (Mouse-ear cress)).